A 436-amino-acid polypeptide reads, in one-letter code: Homeobox protein PKNOX1 (436 aa).

The segment at 24–49 is disordered; it reads LKTEQDPNCSEPDVEGVSPPPVGSQT. Residues Ser33 and Ser41 each carry the phosphoserine modification. In terms of domain architecture, MEIS N-terminal spans 80 to 163; sequence GSEGTTSASF…MNSETLLSGE (84 aa). Residues 259–321 constitute a DNA-binding region (homeobox; TALE-type); sequence SKNKRGVLPK…NARRRILQPM (63 aa). The tract at residues 401 to 436 is disordered; sequence AEQSEDDSVDSTGDGGAALAPGHLGGLVLENSDSLQ.

The protein belongs to the TALE/MEIS homeobox family. In terms of assembly, interacts with MN1.

It localises to the nucleus. Its function is as follows. Activates transcription in the presence of PBX1A and HOXA1. This Bos taurus (Bovine) protein is Homeobox protein PKNOX1.